The following is a 62-amino-acid chain: LECHNQQSSQTPTTTGCSGGENNCYKKEWRDNRGYRTERGCGCPSVKKGIGINCCTTDRCNN.

Polar residues predominate over residues 1 to 16; that stretch reads LECHNQQSSQTPTTTG. The interval 1-23 is disordered; that stretch reads LECHNQQSSQTPTTTGCSGGENN. Cystine bridges form between C3/C24, C17/C41, C43/C54, and C55/C60.

This sequence belongs to the three-finger toxin family. Short-chain subfamily. Type I alpha-neurotoxin sub-subfamily. As to expression, expressed by the venom gland.

It is found in the secreted. Binds to muscle nicotinic acetylcholine receptor (nAChR) and inhibit acetylcholine from binding to the receptor, thereby impairing neuromuscular transmission. The sequence is that of Cobrotoxin II from Naja kaouthia (Monocled cobra).